The following is a 377-amino-acid chain: Nitric oxide reductase FlRd-NAD(+) reductase (377 aa).

Belongs to the FAD-dependent oxidoreductase family. It depends on FAD as a cofactor.

The protein resides in the cytoplasm. It catalyses the reaction 2 reduced [nitric oxide reductase rubredoxin domain] + NAD(+) + H(+) = 2 oxidized [nitric oxide reductase rubredoxin domain] + NADH. It participates in nitrogen metabolism; nitric oxide reduction. One of at least two accessory proteins for anaerobic nitric oxide (NO) reductase. Reduces the rubredoxin moiety of NO reductase. The sequence is that of Nitric oxide reductase FlRd-NAD(+) reductase from Salmonella agona (strain SL483).